The following is a 207-amino-acid chain: Large ribosomal subunit protein bL25 (207 aa).

The protein belongs to the bacterial ribosomal protein bL25 family. CTC subfamily. As to quaternary structure, part of the 50S ribosomal subunit; part of the 5S rRNA/L5/L18/L25 subcomplex. Contacts the 5S rRNA. Binds to the 5S rRNA independently of L5 and L18.

Its function is as follows. This is one of the proteins that binds to the 5S RNA in the ribosome where it forms part of the central protuberance. This is Large ribosomal subunit protein bL25 from Dictyoglomus thermophilum (strain ATCC 35947 / DSM 3960 / H-6-12).